The sequence spans 113 residues: Tyrosine-protein phosphatase 15 (113 aa).

The Tyrosine-protein phosphatase domain occupies 1 to 113 (WRMVYDNNVN…RSTGDGVALI (113 aa)).

The protein belongs to the protein-tyrosine phosphatase family.

The enzyme catalyses O-phospho-L-tyrosyl-[protein] + H2O = L-tyrosyl-[protein] + phosphate. The protein is Tyrosine-protein phosphatase 15 (STY-15) of Styela plicata (Wrinkled sea squirt).